A 636-amino-acid chain; its full sequence is Chaperone protein HtpG (636 aa).

The segment at 1-349 (MAKHQFQTEV…SEDLPLNVSR (349 aa)) is a; substrate-binding. Residues 350-562 (EILQENRILA…ADAQMAAMAH (213 aa)) are b. A c region spans residues 563–636 (MFRAMGQAMP…RLSRITAKAL (74 aa)).

The protein belongs to the heat shock protein 90 family. Homodimer.

The protein resides in the cytoplasm. Functionally, molecular chaperone. Has ATPase activity. The polypeptide is Chaperone protein HtpG (Aliarcobacter butzleri (strain RM4018) (Arcobacter butzleri)).